Here is a 451-residue protein sequence, read N- to C-terminus: MNKMKNFKRRLSLSVPRPETIEESLTEFTEQFNQLHTQRNEDGRDEPGQLSPGVQYQQRQNQRRFSMEDLNKRLSLPMDIRLPQEFLQKLQLENPGLPKPLTRMSRRASLSDIGFGKLETYVKLDKLGEGTYATVFKGRSKLTENLVALKEIRLEHEEGAPCTAIREVSLLKDLKHANIVTLHDLIHTDRSLTLVFEYLDSDLKQYLDHCGNLMNMHNVKIFMFQLLRGLAYCHRRKILHRDLKPQNLLINERGELKLADFGLARAKSVPTKTYSNEVVTLWYRPPDVLLGSTEYSTPIDMWGVGCILYEMATGKPLFPGSTVKEELHLIFRLLGTPTEESWPGVTSISEFRAYNFPRYLPQPLLSHAPRLDTEGINLLTSLLLYESKSRMSAEAALSHPYFQSLGERVHQLDDTASIFSLKEIQLQKDPGYRGLAFQHPGRGKSRRQSIF.

A disordered region spans residues 39–61; the sequence is RNEDGRDEPGQLSPGVQYQQRQN. Serine 51 is subject to Phosphoserine. The segment covering 52-61 has biased composition (polar residues); the sequence is PGVQYQQRQN. Serine 66 and serine 109 each carry phosphoserine. One can recognise a Protein kinase domain in the interval 121 to 402; the sequence is YVKLDKLGEG…AEAALSHPYF (282 aa). ATP contacts are provided by residues 127-135 and lysine 150; that span reads LGEGTYATV. Aspartate 242 acts as the Proton acceptor in catalysis. Residues serine 417 and serine 420 each carry the phosphoserine modification.

This sequence belongs to the protein kinase superfamily. CMGC Ser/Thr protein kinase family. CDC2/CDKX subfamily. As to expression, in brain, kidney, intestine and at a much lower level, in fetal tissues.

The catalysed reaction is L-seryl-[protein] + ATP = O-phospho-L-seryl-[protein] + ADP + H(+). It catalyses the reaction L-threonyl-[protein] + ATP = O-phospho-L-threonyl-[protein] + ADP + H(+). May play a role in signal transduction cascades in terminally differentiated cells. The chain is Cyclin-dependent kinase 18 (Cdk18) from Rattus norvegicus (Rat).